The sequence spans 1234 residues: DNA-directed RNA polymerase subunit beta (1234 aa).

This sequence belongs to the RNA polymerase beta chain family. The RNAP catalytic core consists of 2 alpha, 1 beta, 1 beta' and 1 omega subunit. When a sigma factor is associated with the core the holoenzyme is formed, which can initiate transcription.

The enzyme catalyses RNA(n) + a ribonucleoside 5'-triphosphate = RNA(n+1) + diphosphate. In terms of biological role, DNA-dependent RNA polymerase catalyzes the transcription of DNA into RNA using the four ribonucleoside triphosphates as substrates. This chain is DNA-directed RNA polymerase subunit beta, found in Clostridium perfringens (strain SM101 / Type A).